The following is a 261-amino-acid chain: Cyclin-J18-like (261 aa).

It belongs to the cyclin family.

This Oryza sativa subsp. japonica (Rice) protein is Cyclin-J18-like.